The primary structure comprises 198 residues: Probable GTP-binding protein EngB (198 aa).

The EngB-type G domain occupies 22 to 195 (DLPEIALAGR…WKAIHKMTKT (174 aa)). Residues 30-37 (GRSNVGKS), 57-61 (GKTQT), 75-78 (DVPG), 142-145 (TKAD), and 174-176 (FSS) each bind GTP. Serine 37 and threonine 59 together coordinate Mg(2+).

Belongs to the TRAFAC class TrmE-Era-EngA-EngB-Septin-like GTPase superfamily. EngB GTPase family. Requires Mg(2+) as cofactor.

Functionally, necessary for normal cell division and for the maintenance of normal septation. The chain is Probable GTP-binding protein EngB from Bacillus mycoides (strain KBAB4) (Bacillus weihenstephanensis).